Consider the following 232-residue polypeptide: Large ribosomal subunit protein uL1 (232 aa).

This sequence belongs to the universal ribosomal protein uL1 family. Part of the 50S ribosomal subunit.

Its function is as follows. Binds directly to 23S rRNA. The L1 stalk is quite mobile in the ribosome, and is involved in E site tRNA release. Functionally, protein L1 is also a translational repressor protein, it controls the translation of the L11 operon by binding to its mRNA. This is Large ribosomal subunit protein uL1 from Methylorubrum extorquens (strain CM4 / NCIMB 13688) (Methylobacterium extorquens).